The chain runs to 459 residues: tRNA modification GTPase MnmE (459 aa).

(6S)-5-formyl-5,6,7,8-tetrahydrofolate-binding residues include R23, E85, and R124. The 160-residue stretch at 221 to 380 (GLSTAIIGRP…LEKAIADTFF (160 aa)) folds into the TrmE-type G domain. N231 serves as a coordination point for K(+). GTP-binding positions include 231–236 (NVGKSS), 250–256 (TEIPGTT), and 275–278 (DTAG). Residue S235 coordinates Mg(2+). K(+)-binding residues include T250, I252, and T255. T256 contacts Mg(2+). K459 contributes to the (6S)-5-formyl-5,6,7,8-tetrahydrofolate binding site.

The protein belongs to the TRAFAC class TrmE-Era-EngA-EngB-Septin-like GTPase superfamily. TrmE GTPase family. As to quaternary structure, homodimer. Heterotetramer of two MnmE and two MnmG subunits. Requires K(+) as cofactor.

Its subcellular location is the cytoplasm. Its function is as follows. Exhibits a very high intrinsic GTPase hydrolysis rate. Involved in the addition of a carboxymethylaminomethyl (cmnm) group at the wobble position (U34) of certain tRNAs, forming tRNA-cmnm(5)s(2)U34. This Oceanobacillus iheyensis (strain DSM 14371 / CIP 107618 / JCM 11309 / KCTC 3954 / HTE831) protein is tRNA modification GTPase MnmE.